The following is a 354-amino-acid chain: Protein-arginine kinase (354 aa).

Positions 24-254 (IVLSSRIRLA…QQIIQQEKMA (231 aa)) constitute a Phosphagen kinase C-terminal domain. Residues 27-31 (SSRIR), His-92, Arg-125, 176-180 (RASVM), and 207-212 (RGIYGE) contribute to the ATP site. Positions 337-342 (RDYRRA) match the RDXXRA motif of the pArg binding pocket involved in allosteric regulation motif.

This sequence belongs to the ATP:guanido phosphotransferase family.

It carries out the reaction L-arginyl-[protein] + ATP = N(omega)-phospho-L-arginyl-[protein] + ADP + H(+). With respect to regulation, appears to be allosterically activated by the binding of pArg-containing polypeptides to the pArg-binding pocket localized in the C-terminal domain of McsB. Its function is as follows. Catalyzes the specific phosphorylation of arginine residues in a large number of proteins. Is part of the bacterial stress response system. Protein arginine phosphorylation has a physiologically important role and is involved in the regulation of many critical cellular processes, such as protein homeostasis, motility, competence, and stringent and stress responses, by regulating gene expression and protein activity. The chain is Protein-arginine kinase from Bacillus cereus (strain AH187).